The sequence spans 484 residues: GTPase Obg (484 aa).

The Obg domain maps to 7 to 164 (PRFVDRVVIH…RDLTLELKTV (158 aa)). The segment at 21–43 (SGGNGCASVHREKFKPLGGPDGG) is disordered. An OBG-type G domain is found at 165-345 (ADVGLVGFPS…LIFGLSQMIS (181 aa)). Residues 171 to 178 (GFPSAGKS), 196 to 200 (FTTLV), 217 to 220 (DVPG), 297 to 300 (NKID), and 326 to 328 (STA) contribute to the GTP site. Positions 178 and 198 each coordinate Mg(2+). In terms of domain architecture, OCT spans 363–441 (PIPVDDSGFT…IGEMTFDWEP (79 aa)). Residues 439 to 484 (WEPQTPAGEPVAMSGRGTDPRLDSNKRVGAAERKAARSRRREHGDG) form a disordered region. Basic and acidic residues predominate over residues 456 to 473 (TDPRLDSNKRVGAAERKA). The span at 474 to 484 (ARSRRREHGDG) shows a compositional bias: basic residues.

The protein belongs to the TRAFAC class OBG-HflX-like GTPase superfamily. OBG GTPase family. Monomer. Requires Mg(2+) as cofactor.

It is found in the cytoplasm. Its function is as follows. An essential GTPase which binds GTP, GDP and possibly (p)ppGpp with moderate affinity, with high nucleotide exchange rates and a fairly low GTP hydrolysis rate. Plays a role in control of the cell cycle, stress response, ribosome biogenesis and in those bacteria that undergo differentiation, in morphogenesis control. This Mycobacterium tuberculosis (strain CDC 1551 / Oshkosh) protein is GTPase Obg.